The chain runs to 89 residues: Small ribosomal subunit protein uS15 (89 aa).

It belongs to the universal ribosomal protein uS15 family. In terms of assembly, part of the 30S ribosomal subunit. Forms a bridge to the 50S subunit in the 70S ribosome, contacting the 23S rRNA.

Its function is as follows. One of the primary rRNA binding proteins, it binds directly to 16S rRNA where it helps nucleate assembly of the platform of the 30S subunit by binding and bridging several RNA helices of the 16S rRNA. Forms an intersubunit bridge (bridge B4) with the 23S rRNA of the 50S subunit in the ribosome. The sequence is that of Small ribosomal subunit protein uS15 from Bifidobacterium animalis subsp. lactis (strain AD011).